Consider the following 246-residue polypeptide: 2-C-methyl-D-erythritol 4-phosphate cytidylyltransferase (246 aa).

This sequence belongs to the IspD/TarI cytidylyltransferase family. IspD subfamily.

It catalyses the reaction 2-C-methyl-D-erythritol 4-phosphate + CTP + H(+) = 4-CDP-2-C-methyl-D-erythritol + diphosphate. It functions in the pathway isoprenoid biosynthesis; isopentenyl diphosphate biosynthesis via DXP pathway; isopentenyl diphosphate from 1-deoxy-D-xylulose 5-phosphate: step 2/6. Its function is as follows. Catalyzes the formation of 4-diphosphocytidyl-2-C-methyl-D-erythritol from CTP and 2-C-methyl-D-erythritol 4-phosphate (MEP). The protein is 2-C-methyl-D-erythritol 4-phosphate cytidylyltransferase of Chlorobaculum tepidum (strain ATCC 49652 / DSM 12025 / NBRC 103806 / TLS) (Chlorobium tepidum).